Here is a 248-residue protein sequence, read N- to C-terminus: Probable transcriptional regulatory protein FTL_0929 (248 aa).

This sequence belongs to the TACO1 family.

It localises to the cytoplasm. The polypeptide is Probable transcriptional regulatory protein FTL_0929 (Francisella tularensis subsp. holarctica (strain LVS)).